We begin with the raw amino-acid sequence, 138 residues long: Basic phospholipase A2 Tbo-G6D49 (138 aa).

An N-terminal signal peptide occupies residues 1 to 16 (MRTLWIMAVLLVGVEG). Cystine bridges form between Cys42/Cys131, Cys44/Cys60, Cys59/Cys111, Cys65/Cys138, Cys66/Cys104, Cys73/Cys97, and Cys91/Cys102. Tyr43, Gly45, and Gly47 together coordinate Ca(2+). The active site involves His63. Asp64 lines the Ca(2+) pocket. Asp105 is a catalytic residue.

As to quaternary structure, monomer. It depends on Ca(2+) as a cofactor. In terms of tissue distribution, expressed by the venom gland.

The protein localises to the secreted. It carries out the reaction a 1,2-diacyl-sn-glycero-3-phosphocholine + H2O = a 1-acyl-sn-glycero-3-phosphocholine + a fatty acid + H(+). Snake venom phospholipase A2 (PLA2) that impairs hemostasis. It weakly inhibits ADP-induced platelet aggregation when tested on platelet rich plasma from human and rabbit blood (15-25% of inhibition at 5-10 ug of enzyme), and dose-dependently inhibits blood coagulation, possibly by inhibiting thrombin activation. Exhibits strong hydrolytic activities toward L-dipalmitoyl phosphatidylcholine. PLA2 catalyzes the calcium-dependent hydrolysis of the 2-acyl groups in 3-sn-phosphoglycerides. In Craspedocephalus borneensis (Borneo pit viper), this protein is Basic phospholipase A2 Tbo-G6D49.